Consider the following 21-residue polypeptide: Helicopsin (21 aa).

Belongs to the CRISP family. Contains 8 disulfide bonds. Expressed by the salivary gland.

Its subcellular location is the secreted. Functionally, helicopsin exhibits robust neurotoxic activity as shown by immediate death (about 8 minutes) of mice due to respiratory paralysis. In Helicops angulatus (South American water snake), this protein is Helicopsin.